The chain runs to 497 residues: Glycerol kinase (497 aa).

Position 12 (threonine 12) interacts with ADP. Residues threonine 12, threonine 13, and serine 14 each coordinate ATP. Threonine 12 serves as a coordination point for sn-glycerol 3-phosphate. Residue arginine 16 coordinates ADP. Positions 82, 83, 134, and 243 each coordinate sn-glycerol 3-phosphate. Residues arginine 82, glutamate 83, tyrosine 134, aspartate 243, and glutamine 244 each coordinate glycerol. Threonine 265 and glycine 308 together coordinate ADP. Residues threonine 265, glycine 308, glutamine 312, and glycine 409 each coordinate ATP. The ADP site is built by glycine 409 and asparagine 413.

Belongs to the FGGY kinase family. As to quaternary structure, homotetramer and homodimer (in equilibrium).

It catalyses the reaction glycerol + ATP = sn-glycerol 3-phosphate + ADP + H(+). It participates in polyol metabolism; glycerol degradation via glycerol kinase pathway; sn-glycerol 3-phosphate from glycerol: step 1/1. With respect to regulation, activated by phosphorylation and inhibited by fructose 1,6-bisphosphate (FBP). Its function is as follows. Key enzyme in the regulation of glycerol uptake and metabolism. Catalyzes the phosphorylation of glycerol to yield sn-glycerol 3-phosphate. This chain is Glycerol kinase, found in Thermoanaerobacter pseudethanolicus (strain ATCC 33223 / 39E) (Clostridium thermohydrosulfuricum).